We begin with the raw amino-acid sequence, 203 residues long: Small ribosomal subunit protein uS4c (203 aa).

Positions 92–150 (MRLDNIIYRLGMAPTIANARQLVNHGHIVVNDRIVTIPSYRCKPKDIISVRNNSTSRNV) constitute an S4 RNA-binding domain.

Belongs to the universal ribosomal protein uS4 family. In terms of assembly, part of the 30S ribosomal subunit. Contacts protein S5. The interaction surface between S4 and S5 is involved in control of translational fidelity.

It localises to the plastid. Its subcellular location is the chloroplast. In terms of biological role, one of the primary rRNA binding proteins, it binds directly to 16S rRNA where it nucleates assembly of the body of the 30S subunit. With S5 and S12 plays an important role in translational accuracy. The protein is Small ribosomal subunit protein uS4c (rps4) of Chlorokybus atmophyticus (Soil alga).